A 230-amino-acid polypeptide reads, in one-letter code: Large ribosomal subunit protein uL3 (230 aa).

Disordered stretches follow at residues Q125–D149 and P210–E230.

This sequence belongs to the universal ribosomal protein uL3 family. Part of the 50S ribosomal subunit. Forms a cluster with proteins L14 and L19.

One of the primary rRNA binding proteins, it binds directly near the 3'-end of the 23S rRNA, where it nucleates assembly of the 50S subunit. The chain is Large ribosomal subunit protein uL3 from Mesomycoplasma hyopneumoniae (strain J / ATCC 25934 / NCTC 10110) (Mycoplasma hyopneumoniae).